The primary structure comprises 370 residues: 4-hydroxy-3-methylbut-2-en-1-yl diphosphate synthase (flavodoxin) (370 aa).

Residues C270, C273, C305, and E312 each coordinate [4Fe-4S] cluster.

The protein belongs to the IspG family. Requires [4Fe-4S] cluster as cofactor.

The catalysed reaction is (2E)-4-hydroxy-3-methylbut-2-enyl diphosphate + oxidized [flavodoxin] + H2O + 2 H(+) = 2-C-methyl-D-erythritol 2,4-cyclic diphosphate + reduced [flavodoxin]. It functions in the pathway isoprenoid biosynthesis; isopentenyl diphosphate biosynthesis via DXP pathway; isopentenyl diphosphate from 1-deoxy-D-xylulose 5-phosphate: step 5/6. Converts 2C-methyl-D-erythritol 2,4-cyclodiphosphate (ME-2,4cPP) into 1-hydroxy-2-methyl-2-(E)-butenyl 4-diphosphate. The polypeptide is 4-hydroxy-3-methylbut-2-en-1-yl diphosphate synthase (flavodoxin) (Hahella chejuensis (strain KCTC 2396)).